Consider the following 626-residue polypeptide: Chaperone protein HtpG (626 aa).

The segment at 1 to 339 (MSTNQETRGF…SNDLPLNVSR (339 aa)) is a; substrate-binding. The tract at residues 340 to 555 (EILQDNKVTA…NDQMTTQMAK (216 aa)) is b. The tract at residues 556 to 626 (LFAAAGQPVP…FIKRINKLLG (71 aa)) is c.

Belongs to the heat shock protein 90 family. As to quaternary structure, homodimer.

The protein resides in the cytoplasm. Its function is as follows. Molecular chaperone. Has ATPase activity. In Aggregatibacter actinomycetemcomitans (Actinobacillus actinomycetemcomitans), this protein is Chaperone protein HtpG.